Here is a 480-residue protein sequence, read N- to C-terminus: Ribulose bisphosphate carboxylase large chain (480 aa).

Positions 1–2 (MS) are excised as a propeptide. Residue Pro3 is modified to N-acetylproline. Lys14 carries the N6,N6,N6-trimethyllysine modification. 2 residues coordinate substrate: Asn123 and Thr173. Lys175 (proton acceptor) is an active-site residue. Substrate is bound at residue Lys177. Positions 201, 203, and 204 each coordinate Mg(2+). An N6-carboxylysine modification is found at Lys201. His294 functions as the Proton acceptor in the catalytic mechanism. Substrate contacts are provided by Arg295, His327, and Ser379.

The protein belongs to the RuBisCO large chain family. Type I subfamily. Heterohexadecamer of 8 large chains and 8 small chains; disulfide-linked. The disulfide link is formed within the large subunit homodimers. It depends on Mg(2+) as a cofactor. The disulfide bond which can form in the large chain dimeric partners within the hexadecamer appears to be associated with oxidative stress and protein turnover.

Its subcellular location is the plastid. The protein resides in the chloroplast. It carries out the reaction 2 (2R)-3-phosphoglycerate + 2 H(+) = D-ribulose 1,5-bisphosphate + CO2 + H2O. The enzyme catalyses D-ribulose 1,5-bisphosphate + O2 = 2-phosphoglycolate + (2R)-3-phosphoglycerate + 2 H(+). RuBisCO catalyzes two reactions: the carboxylation of D-ribulose 1,5-bisphosphate, the primary event in carbon dioxide fixation, as well as the oxidative fragmentation of the pentose substrate in the photorespiration process. Both reactions occur simultaneously and in competition at the same active site. This is Ribulose bisphosphate carboxylase large chain from Basella alba (Malabar spinach).